The chain runs to 137 residues: Proofreading thioesterase EntH (137 aa).

The active-site Nucleophile or proton acceptor is Glu63.

This sequence belongs to the thioesterase PaaI family. Homotetramer. Dimer of dimers. Interacts specifically with the aryl carrier protein (ArCP) domain of EntB.

It is found in the cytoplasm. The protein operates within siderophore biosynthesis; enterobactin biosynthesis. Required for optimal enterobactin synthesis. Acts as a proofreading enzyme that prevents EntB misacylation by hydrolyzing the thioester bound existing between EntB and wrongly charged molecules. This Salmonella paratyphi B (strain ATCC BAA-1250 / SPB7) protein is Proofreading thioesterase EntH.